The following is a 351-amino-acid chain: Hydroxymethylglutaryl-CoA synthase (351 aa).

Residue D30 coordinates (3S)-3-hydroxy-3-methylglutaryl-CoA. Residue E82 is the Proton donor/acceptor of the active site. The (3S)-3-hydroxy-3-methylglutaryl-CoA site is built by C114, S155, T203, and H236. The active-site Acyl-thioester intermediate is C114. Residue H236 is the Proton donor/acceptor of the active site. R241 is a CoA binding site. The (3S)-3-hydroxy-3-methylglutaryl-CoA site is built by R245, N268, and S298.

The protein belongs to the thiolase-like superfamily. Archaeal HMG-CoA synthase family. As to quaternary structure, interacts with acetoacetyl-CoA thiolase that catalyzes the precedent step in the pathway and with a DUF35 protein. The acetoacetyl-CoA thiolase/HMG-CoA synthase complex channels the intermediate via a fused CoA-binding site, which allows for efficient coupling of the endergonic thiolase reaction with the exergonic HMGCS reaction.

It carries out the reaction acetoacetyl-CoA + acetyl-CoA + H2O = (3S)-3-hydroxy-3-methylglutaryl-CoA + CoA + H(+). The protein operates within metabolic intermediate biosynthesis; (R)-mevalonate biosynthesis; (R)-mevalonate from acetyl-CoA: step 2/3. Functionally, catalyzes the condensation of acetyl-CoA with acetoacetyl-CoA to form 3-hydroxy-3-methylglutaryl-CoA (HMG-CoA). Functions in the mevalonate (MVA) pathway leading to isopentenyl diphosphate (IPP), a key precursor for the biosynthesis of isoprenoid compounds that are building blocks of archaeal membrane lipids. In Pyrobaculum neutrophilum (strain DSM 2338 / JCM 9278 / NBRC 100436 / V24Sta) (Thermoproteus neutrophilus), this protein is Hydroxymethylglutaryl-CoA synthase.